Reading from the N-terminus, the 312-residue chain is Olfactory receptor 6C74 (312 aa).

Topologically, residues 1-23 (MRNHTTVANFILLGLTDDPQLQV) are extracellular. Asparagine 3 is a glycosylation site (N-linked (GlcNAc...) asparagine). A helical transmembrane segment spans residues 24–44 (IIFLLLFFTYMLSITGNLTII). The Cytoplasmic portion of the chain corresponds to 45-63 (TLTLLDLHLKTPMYFFLRN). Residues 64-84 (FSFLEVSFTTVYIPKFLVSMA) form a helical membrane-spanning segment. Topologically, residues 85–95 (TGDKTISYNDC) are extracellular. Cysteine 95 and cysteine 177 form a disulfide bridge. Residues 96–116 (AAQLFFTILLGATEFFLLAAM) form a helical membrane-spanning segment. The Cytoplasmic segment spans residues 117–140 (SYERYVAICKPLHYTTIMSSRVCS). Residues 141-161 (LLVFASWMAGFLIIFPPLLMG) traverse the membrane as a helical segment. Residues 162-194 (LQLDFCAANTVDHFFCDVSPILQLSCTDTDIIE) lie on the Extracellular side of the membrane. Residues 195–215 (LMMLLSAILTLLVTLVLVILS) form a helical membrane-spanning segment. Residues 216–237 (YTNIIRTILKIPSSQQRKKAFS) are Cytoplasmic-facing. Residues 238 to 258 (TCSSHMVVVSISYGSCIFMYV) traverse the membrane as a helical segment. Residues 259-269 (KPSAKERVSLN) are Extracellular-facing. Residues 270–290 (KGIALLSTSVAPMLNPFIYTL) traverse the membrane as a helical segment. The Cytoplasmic portion of the chain corresponds to 291 to 312 (RNKQVKDVFKHTVKKIELFSMK).

It belongs to the G-protein coupled receptor 1 family.

It is found in the cell membrane. In terms of biological role, odorant receptor. In Homo sapiens (Human), this protein is Olfactory receptor 6C74 (OR6C74).